The chain runs to 527 residues: N-acetylglutamate synthase, mitochondrial (527 aa).

The transit peptide at 1–39 (MAKVNSGSSGCRAMVMAGQFWTKPFALSSQRSGPHRRSA) directs the protein to the mitochondrion. The tract at residues 28–65 (SSQRSGPHRRSAAEVNRRMSSSRTAGHGSKTPLWSQQE) is disordered. The segment at 40–83 (AEVNRRMSSSRTAGHGSKTPLWSQQESYNHSSLGERSAWSNRTL) is may stabilize the oligomeric structure. Positions 40 to 361 (AEVNRRMSSS…SGTLFKNGDP (322 aa)) are amino-acid kinase domain (AAK). The N-acetyltransferase domain occupies 360–511 (DPIRRYSSLE…FAKSHPDSFC (152 aa)). Substrate-binding positions include K386, K429, and 459-464 (RSRTTN).

This sequence belongs to the acetyltransferase family. Homodimer. Homotetramer.

The protein localises to the mitochondrion matrix. The enzyme catalyses L-glutamate + acetyl-CoA = N-acetyl-L-glutamate + CoA + H(+). Inhibited by L-arginine. In terms of biological role, plays a role in the regulation of ureagenesis by producing the essential cofactor N-acetylglutamate (NAG), thus modulating carbamoylphosphate synthase I (cps1) activity. The polypeptide is N-acetylglutamate synthase, mitochondrial (Danio rerio (Zebrafish)).